Reading from the N-terminus, the 413-residue chain is Replication factor C large subunit (413 aa).

54-61 (GPPGSGKT) serves as a coordination point for ATP.

It belongs to the activator 1 small subunits family. RfcL subfamily. In terms of assembly, heteromultimer composed of small subunits (RfcS) and large subunits (RfcL).

Functionally, part of the RFC clamp loader complex which loads the PCNA sliding clamp onto DNA. The sequence is that of Replication factor C large subunit from Thermofilum pendens (strain DSM 2475 / Hrk 5).